Here is a 513-residue protein sequence, read N- to C-terminus: ATP synthase subunit alpha (513 aa).

169–176 (GDRQTGKT) is a binding site for ATP.

This sequence belongs to the ATPase alpha/beta chains family. In terms of assembly, F-type ATPases have 2 components, CF(1) - the catalytic core - and CF(0) - the membrane proton channel. CF(1) has five subunits: alpha(3), beta(3), gamma(1), delta(1), epsilon(1). CF(0) has three main subunits: a(1), b(2) and c(9-12). The alpha and beta chains form an alternating ring which encloses part of the gamma chain. CF(1) is attached to CF(0) by a central stalk formed by the gamma and epsilon chains, while a peripheral stalk is formed by the delta and b chains.

It is found in the cell inner membrane. The catalysed reaction is ATP + H2O + 4 H(+)(in) = ADP + phosphate + 5 H(+)(out). Its function is as follows. Produces ATP from ADP in the presence of a proton gradient across the membrane. The alpha chain is a regulatory subunit. This chain is ATP synthase subunit alpha, found in Pseudoalteromonas translucida (strain TAC 125).